The following is a 389-amino-acid chain: Phospho-N-acetylmuramoyl-pentapeptide-transferase (389 aa).

10 helical membrane-spanning segments follow: residues 25–45, 74–94, 97–117, 134–154, 190–210, 222–242, 259–279, 286–306, 311–331, and 366–386; these read RAVM…PFVI, MGGV…ADWG, FIWI…VDDY, FFWQ…SVSE, ISYP…IVGS, GLVI…AYVM, AGEL…FLWF, VFMG…IAVI, IVLF…MLQV, and QVVV…LSTL.

Belongs to the glycosyltransferase 4 family. MraY subfamily. Mg(2+) is required as a cofactor.

It is found in the cell inner membrane. The enzyme catalyses UDP-N-acetyl-alpha-D-muramoyl-L-alanyl-gamma-D-glutamyl-meso-2,6-diaminopimeloyl-D-alanyl-D-alanine + di-trans,octa-cis-undecaprenyl phosphate = di-trans,octa-cis-undecaprenyl diphospho-N-acetyl-alpha-D-muramoyl-L-alanyl-D-glutamyl-meso-2,6-diaminopimeloyl-D-alanyl-D-alanine + UMP. It functions in the pathway cell wall biogenesis; peptidoglycan biosynthesis. Catalyzes the initial step of the lipid cycle reactions in the biosynthesis of the cell wall peptidoglycan: transfers peptidoglycan precursor phospho-MurNAc-pentapeptide from UDP-MurNAc-pentapeptide onto the lipid carrier undecaprenyl phosphate, yielding undecaprenyl-pyrophosphoryl-MurNAc-pentapeptide, known as lipid I. The sequence is that of Phospho-N-acetylmuramoyl-pentapeptide-transferase from Ralstonia pickettii (strain 12J).